The following is a 348-amino-acid chain: Ribonuclease H (348 aa).

A compositionally biased stretch (polar residues) spans asparagine 54–alanine 65. The interval asparagine 54–arginine 81 is disordered. The region spanning tyrosine 184–serine 346 is the RNase H type-1 domain. Mg(2+) contacts are provided by aspartate 193, glutamate 235, aspartate 264, and aspartate 338.

The protein belongs to the RNase H family. It depends on Mg(2+) as a cofactor.

The catalysed reaction is Endonucleolytic cleavage to 5'-phosphomonoester.. Endonuclease that specifically degrades the RNA of RNA-DNA hybrids. This Saccharomyces cerevisiae (strain ATCC 204508 / S288c) (Baker's yeast) protein is Ribonuclease H (RNH1).